The following is a 298-amino-acid chain: Tyrosine recombinase XerD (298 aa).

The region spanning 2-87 is the Core-binding (CB) domain; it reads KQELARIEQF…AVRRLFQYLY (86 aa). The region spanning 108 to 292 is the Tyr recombinase domain; sequence RLPKDLSEAQ…ATERLRQLHQ (185 aa). Residues Arg-148, Lys-172, His-244, Arg-247, and His-270 contribute to the active site. Residue Tyr-279 is the O-(3'-phospho-DNA)-tyrosine intermediate of the active site.

This sequence belongs to the 'phage' integrase family. XerD subfamily. Forms a cyclic heterotetrameric complex composed of two molecules of XerC and two molecules of XerD, in which XerC interacts with XerD via its C-terminal region, XerD interacts with XerC via its C-terminal region and so on.

It localises to the cytoplasm. With respect to regulation, ftsK may regulate the catalytic switch between XerC and XerD in the heterotetrameric complex during the two steps of the recombination process. Site-specific tyrosine recombinase, which acts by catalyzing the cutting and rejoining of the recombining DNA molecules. Binds cooperatively to specific DNA consensus sequences that are separated from XerC binding sites by a short central region, forming the heterotetrameric XerC-XerD complex that recombines DNA substrates. The complex is essential to convert dimers of the bacterial chromosome into monomers to permit their segregation at cell division. It also contributes to the segregational stability of plasmids. In the complex XerD specifically exchanges the bottom DNA strands. The sequence is that of Tyrosine recombinase XerD from Shigella flexneri.